Here is a 364-residue protein sequence, read N- to C-terminus: Probable tartrate dehydrogenase/decarboxylase TtuC (364 aa).

D222, D246, and D250 together coordinate Mn(2+).

The protein belongs to the isocitrate and isopropylmalate dehydrogenases family. It depends on Mg(2+) as a cofactor. Mn(2+) serves as cofactor. The cofactor is K(+).

The protein localises to the cytoplasm. It carries out the reaction tartrate + NAD(+) = 2-hydroxy-3-oxosuccinate + NADH + H(+). The enzyme catalyses (2R,3S)-tartrate + NAD(+) = 2-hydroxy-3-oxosuccinate + NADH + H(+). The catalysed reaction is (2R,3R)-tartrate + NAD(+) = 2-hydroxy-3-oxosuccinate + NADH + H(+). It catalyses the reaction (2R,3R)-tartrate + H(+) = (R)-glycerate + CO2. It carries out the reaction (R)-malate + NAD(+) = pyruvate + CO2 + NADH. The protein operates within carbohydrate acid metabolism; tartrate degradation; 2-hydroxy-3-oxosuccinate from L-tartrate: step 1/1. It functions in the pathway carbohydrate acid metabolism; tartrate degradation; 2-hydroxy-3-oxosuccinate from meso-tartrate: step 1/1. Its pathway is carbohydrate acid metabolism; tartrate degradation; D-glycerate from L-tartrate: step 1/1. In terms of biological role, has multiple catalytic activities. Apart from catalyzing the oxidation of (+)-tartrate to oxaloglycolate, also converts meso-tartrate to D-glycerate and catalyzes the oxidative decarboxylation of D-malate to pyruvate. The sequence is that of Probable tartrate dehydrogenase/decarboxylase TtuC (ttuC) from Agrobacterium vitis (Rhizobium vitis).